The following is a 299-amino-acid chain: Dermonecrotic toxin LiSicTox-alphaIVA1 (299 aa).

The N-terminal stretch at 1–18 (MLFPTALIFGCWALVIEG) is a signal peptide. Residue histidine 30 is part of the active site. Mg(2+) contacts are provided by glutamate 50 and aspartate 52. Residue histidine 66 is the Nucleophile of the active site. 2 cysteine pairs are disulfide-bonded: cysteine 70/cysteine 76 and cysteine 72/cysteine 217. A Mg(2+)-binding site is contributed by aspartate 110.

It belongs to the arthropod phospholipase D family. Class II subfamily. Class IIa sub-subfamily. The cofactor is Mg(2+). Expressed by the venom gland.

The protein resides in the secreted. The enzyme catalyses an N-(acyl)-sphingosylphosphocholine = an N-(acyl)-sphingosyl-1,3-cyclic phosphate + choline. It carries out the reaction an N-(acyl)-sphingosylphosphoethanolamine = an N-(acyl)-sphingosyl-1,3-cyclic phosphate + ethanolamine. It catalyses the reaction a 1-acyl-sn-glycero-3-phosphocholine = a 1-acyl-sn-glycero-2,3-cyclic phosphate + choline. The catalysed reaction is a 1-acyl-sn-glycero-3-phosphoethanolamine = a 1-acyl-sn-glycero-2,3-cyclic phosphate + ethanolamine. In terms of biological role, dermonecrotic toxins cleave the phosphodiester linkage between the phosphate and headgroup of certain phospholipids (sphingolipid and lysolipid substrates), forming an alcohol (often choline) and a cyclic phosphate. This toxin acts on sphingomyelin (SM) with high activity. It may also act on ceramide phosphoethanolamine (CPE), lysophosphatidylcholine (LPC) and lysophosphatidylethanolamine (LPE), but not on lysophosphatidylserine (LPS), and lysophosphatidylglycerol (LPG). It acts by transphosphatidylation, releasing exclusively cyclic phosphate products as second products. Has hemolytic activity in human erythrocytes in a dose-dependent manner. In vivo, this toxin induces dermonecrosis, edema, hemorrhage, massive inflammatory response, as well as vascular permeability. In addition, thrombus formation has also been detected in dermal blood vessels. It also induces platelet aggregation. It is noteworthy that a Glu-248 replaces the Asp present in paralogs, without decrease in catalytic and hemolytic activities. The protein is Dermonecrotic toxin LiSicTox-alphaIVA1 of Loxosceles intermedia (Brown spider).